The primary structure comprises 154 residues: Large ribosomal subunit protein uL13 (154 aa).

The protein belongs to the universal ribosomal protein uL13 family. As to quaternary structure, part of the 50S ribosomal subunit.

This protein is one of the early assembly proteins of the 50S ribosomal subunit, although it is not seen to bind rRNA by itself. It is important during the early stages of 50S assembly. This is Large ribosomal subunit protein uL13 from Brucella canis (strain ATCC 23365 / NCTC 10854 / RM-666).